The following is a 295-amino-acid chain: Protease HtpX homolog (295 aa).

2 consecutive transmembrane segments (helical) span residues 15-35 and 39-59; these read LVMA…GYAF and AQTG…VILG. Residue H143 participates in Zn(2+) binding. E144 is a catalytic residue. H147 serves as a coordination point for Zn(2+). Transmembrane regions (helical) follow at residues 159–179 and 195–215; these read ALAL…AMWW and VIML…ASMA. E224 is a binding site for Zn(2+).

The protein belongs to the peptidase M48B family. Zn(2+) serves as cofactor.

It is found in the cell membrane. The polypeptide is Protease HtpX homolog (Ligilactobacillus salivarius (strain UCC118) (Lactobacillus salivarius)).